The following is a 264-amino-acid chain: S-adenosylmethionine decarboxylase proenzyme (264 aa).

Serine 112 acts as the Schiff-base intermediate with substrate; via pyruvic acid in catalysis. Serine 112 carries the post-translational modification Pyruvic acid (Ser); by autocatalysis. Catalysis depends on histidine 117, which acts as the Proton acceptor; for processing activity. Catalysis depends on cysteine 140, which acts as the Proton donor; for catalytic activity.

It belongs to the prokaryotic AdoMetDC family. Type 2 subfamily. As to quaternary structure, heterooctamer of four alpha and four beta chains arranged as a tetramer of alpha/beta heterodimers. It depends on pyruvate as a cofactor. In terms of processing, is synthesized initially as an inactive proenzyme. Formation of the active enzyme involves a self-maturation process in which the active site pyruvoyl group is generated from an internal serine residue via an autocatalytic post-translational modification. Two non-identical subunits are generated from the proenzyme in this reaction, and the pyruvate is formed at the N-terminus of the alpha chain, which is derived from the carboxyl end of the proenzyme. The post-translation cleavage follows an unusual pathway, termed non-hydrolytic serinolysis, in which the side chain hydroxyl group of the serine supplies its oxygen atom to form the C-terminus of the beta chain, while the remainder of the serine residue undergoes an oxidative deamination to produce ammonia and the pyruvoyl group blocking the N-terminus of the alpha chain.

The enzyme catalyses S-adenosyl-L-methionine + H(+) = S-adenosyl 3-(methylsulfanyl)propylamine + CO2. Its pathway is amine and polyamine biosynthesis; S-adenosylmethioninamine biosynthesis; S-adenosylmethioninamine from S-adenosyl-L-methionine: step 1/1. Catalyzes the decarboxylation of S-adenosylmethionine to S-adenosylmethioninamine (dcAdoMet), the propylamine donor required for the synthesis of the polyamines spermine and spermidine from the diamine putrescine. The sequence is that of S-adenosylmethionine decarboxylase proenzyme from Salmonella gallinarum (strain 287/91 / NCTC 13346).